We begin with the raw amino-acid sequence, 65 residues long: Large ribosomal subunit protein uL29 (65 aa).

It belongs to the universal ribosomal protein uL29 family.

The polypeptide is Large ribosomal subunit protein uL29 (Delftia acidovorans (strain DSM 14801 / SPH-1)).